Reading from the N-terminus, the 431-residue chain is MPQLTRSAELFEKAKQFIPGGVNSPVRAFKSVGGTPIFMAKGQGAYMTDVDGNTYLDYVGSWGPFILGSMHPRITAAIENTLTKIGTSFGTPIEMEIEIAELLTQIVPSIEMVRMVNSGTEATMSAVRLARGYTGRDKIIKFEGCYHGHGDSFLIKAGSGALTLGAPDSPGVTKGTANDTLNAKYNDIESVRVLVKENKDSIAAIIIEPVAGNTGVIPAKTDFLQALRDLCTEEGIVLIFDEVMCGFRVALGGAQERYGITPDLTTMGKIIGGGLPVGAFGGKREIMQRVAPIGDVYQAGTLSGNPLALTAGLETLKILRDDNPYPELERKAAFLEEGFRDNMNKLGLSYVQNRVGSMACLFFTETPVENYDTAITCDLKKYGKYYHSMLDQGIYLAPSQFEAMFTSAVMTDEDLEKTVKANYVALQAAEA.

Lys269 is modified (N6-(pyridoxal phosphate)lysine).

It belongs to the class-III pyridoxal-phosphate-dependent aminotransferase family. HemL subfamily. In terms of assembly, homodimer. Pyridoxal 5'-phosphate serves as cofactor.

It localises to the cytoplasm. It catalyses the reaction (S)-4-amino-5-oxopentanoate = 5-aminolevulinate. Its pathway is porphyrin-containing compound metabolism; protoporphyrin-IX biosynthesis; 5-aminolevulinate from L-glutamyl-tRNA(Glu): step 2/2. It functions in the pathway porphyrin-containing compound metabolism; chlorophyll biosynthesis. The polypeptide is Glutamate-1-semialdehyde 2,1-aminomutase (Chlorobium phaeobacteroides (strain BS1)).